The following is a 24-amino-acid chain: Neurotoxin 5 (24 aa).

The 23-residue stretch at 2–24 folds into the LCN-type CS-alpha/beta domain; that stretch reads RDAYIAQNYNCVYTCFKNDYCND.

It belongs to the long (4 C-C) scorpion toxin superfamily. Sodium channel inhibitor family. Alpha subfamily. Expressed by the venom gland.

The protein localises to the secreted. In terms of biological role, binds to sodium channels (Nav) and inhibits the inactivation of the activated channels, thereby blocking neuronal transmission. This is Neurotoxin 5 from Buthus occitanus tunetanus (Common European scorpion).